The following is a 498-amino-acid chain: Calcium uptake protein, mitochondrial (498 aa).

The transit peptide at 1–29 directs the protein to the mitochondrion; the sequence is MPALSHYRSVSSLPSVDRSFLLIQRLRIH. EF-hand domains lie at 216–241, 243–278, 329–364, and 437–472; these read EFFMLFDVDNDGLISFKEYIFFVTLL, IPESSFAVAFKMFDTDNNGEIDKEEFKTVMSLMRSQ, LTEEMLRLEFAHYDYKRRGSISAKDFALSMVAAADA, and LSDNVIEIAFHVFDSNQDGNLSVDEFLRVLHRRERD. Ca(2+) contacts are provided by Asp222, Asp224, Asp226, Glu233, Asp256, Asp258, Asn260, Glu262, and Glu267. The Ca(2+) site is built by Asp450, Asn452, Asp454, Asn456, and Glu461.

It belongs to the MICU1 family. MICU1 subfamily. As to expression, expressed in both green and non-green tissues, including roots, shoots, floral buds and pollen.

It localises to the mitochondrion inner membrane. It is found in the mitochondrion intermembrane space. Its function is as follows. Calcium-binding protein maintaining matrix calcium levels at low concentration. Regulates mitochondrial calcium dynamics in planta by restricting influx. In Arabidopsis thaliana (Mouse-ear cress), this protein is Calcium uptake protein, mitochondrial.